A 421-amino-acid chain; its full sequence is Phosphoribosylamine--glycine ligase (421 aa).

The ATP-grasp domain occupies 108–314; it reads KEIMVKYNVP…FAQNIDDIMM (207 aa). 134-195 serves as a coordination point for ATP; the sequence is IEEQGAPIVV…EEFLDGEEFS (62 aa). Residues E284 and N286 each contribute to the Mg(2+) site.

Belongs to the GARS family. Requires Mg(2+) as cofactor. Mn(2+) is required as a cofactor.

It carries out the reaction 5-phospho-beta-D-ribosylamine + glycine + ATP = N(1)-(5-phospho-beta-D-ribosyl)glycinamide + ADP + phosphate + H(+). The protein operates within purine metabolism; IMP biosynthesis via de novo pathway; N(1)-(5-phospho-D-ribosyl)glycinamide from 5-phospho-alpha-D-ribose 1-diphosphate: step 2/2. In Streptococcus pyogenes serotype M1, this protein is Phosphoribosylamine--glycine ligase.